Reading from the N-terminus, the 141-residue chain is Putative pre-16S rRNA nuclease (141 aa).

It belongs to the YqgF nuclease family.

It localises to the cytoplasm. Could be a nuclease involved in processing of the 5'-end of pre-16S rRNA. In Aliivibrio fischeri (strain MJ11) (Vibrio fischeri), this protein is Putative pre-16S rRNA nuclease.